Reading from the N-terminus, the 70-residue chain is uncharacterized protein (70 aa).

This is an uncharacterized protein from Treponema pallidum (strain Nichols).